A 1242-amino-acid polypeptide reads, in one-letter code: Structural polyprotein (1242 aa).

The tract at residues 1–36 (MFPYPTLNYSPMAPVNPMAYRDPNPPRRRWRPFRPP) is necessary for nucleocapsid assembly and virus assembly. The disordered stretch occupies residues 1-104 (MFPYPTLNYS…KQKPGKRQRM (104 aa)). The segment at 37–70 (LAAQIEDLRRSIANLTFKQRAPNPPAGPPAKRKK) is host transcription inhibition. The Supraphysiological nuclear export signal signature appears at 44–51 (LRRSIANL). The span at 66–104 (AKRKKPAPKPKPAAPKKKRQPPPAKKQKRKQKPGKRQRM) shows a compositional bias: basic residues. A Nuclear localization signal motif is present at residues 67–70 (KRKK). The interval 83–113 (KRQPPPAKKQKRKQKPGKRQRMCMKLESDKT) is binding to the viral RNA. Residues 98-112 (PGKRQRMCMKLESDK) form a ribosome-binding region. Serine 110 is modified (phosphoserine). In terms of domain architecture, Peptidase S3 spans 112–261 (KTFPILLNGQ…KDTPEGSEPW (150 aa)). At threonine 113 the chain carries Phosphothreonine. Active-site charge relay system residues include histidine 138, aspartate 160, and serine 212. The tract at residues 262–273 (SLTTVMCVLANI) is functions as an uncleaved signal peptide for the precursor of protein E3/E2. Asparagine 272 is a glycosylation site (N-linked (GlcNAc...) asparagine; by host). At 325-688 (DLETHFTQYK…YYYNRYPMTT (364 aa)) the chain is on the extracellular side. The chain crosses the membrane as a helical span at residues 689-709 (IVGLCTCAAIIMVSCITSVWL). Over 710 to 744 (LCRTRNLCITPYRLAPNAQVPILLAVLCCVKPTRA) the chain is Cytoplasmic. Residues cysteine 717, cysteine 737, and cysteine 738 are each lipidated (S-palmitoyl cysteine; by host). The segment at 717–737 (CITPYRLAPNAQVPILLAVLC) is transient transmembrane before p62-6K protein processing. Residues 745–759 (DDTLQVLNYLWNNNQ) are Extracellular-facing. 2 helical membrane-spanning segments follow: residues 760–780 (NFFW…MRML) and 781–801 (RCLL…GAAA). Topologically, residues 802 to 1218 (YEHTAVMPNK…WSWLKVLVGS (417 aa)) are extracellular. 8 disulfide bridges follow: cysteine 850–cysteine 915, cysteine 863–cysteine 895, cysteine 864–cysteine 897, cysteine 869–cysteine 879, cysteine 1061–cysteine 1073, cysteine 1103–cysteine 1178, cysteine 1108–cysteine 1182, and cysteine 1130–cysteine 1172. Residues 885 to 902 (VYPFMWGGAYCFCDTENT) are E1 fusion peptide loop. A helical membrane pass occupies residues 1219–1239 (TSAFIVLGLIATAVVALVLFT). Topologically, residues 1240 to 1242 (HKH) are cytoplasmic.

As to quaternary structure, part of a tetrameric complex composed of host CRM1, host importin alpha/beta dimer and the viral capsid; this complex blocks the receptor-mediated transport through the nuclear pore. Interacts with host phosphatase PPP1CA; this interaction dephosphorylates the capsid protein, which increases its ability to bind to the viral genome. Interacts with host karyopherin KPNA4; this interaction allows the nuclear import of the viral capsid protein. Interacts with spike glycoprotein E2. Interacts with host IRAK1; the interaction leads to inhibition of IRAK1-dependent signaling. The precursor of protein E3/E2 and E1 form a heterodimer shortly after synthesis. In terms of assembly, the precursor of protein E3/E2 and E1 form a heterodimer shortly after synthesis. Processing of the precursor of protein E3/E2 into E2 and E3 results in a heterodimer of the spike glycoproteins E2 and E1. Spike at virion surface are constituted of three E2-E1 heterodimers. After target cell attachment and endocytosis, E1 change conformation to form homotrimers. Interacts with 6K protein. As to quaternary structure, processing of the precursor of protein E3/E2 into E2 and E3 results in a heterodimer of the spike glycoproteins E2 and E1. Spike at virion surface are constituted of three E2-E1 heterodimers. Interacts with 6K protein. Interacts with spike glycoprotein E1. Interacts with spike glycoprotein E2. Post-translationally, structural polyprotein: Specific enzymatic cleavages in vivo yield mature proteins. Capsid protein is auto-cleaved during polyprotein translation, unmasking a signal peptide at the N-terminus of the precursor of E3/E2. The remaining polyprotein is then targeted to the host endoplasmic reticulum, where host signal peptidase cleaves it into pE2, 6K and E1 proteins. pE2 is further processed to mature E3 and E2 by host furin in trans-Golgi vesicle. In terms of processing, phosphorylated on serine and threonine residues. Palmitoylated via thioester bonds. These palmitoylations may induce disruption of the C-terminus transmembrane. This would result in the reorientation of E2 C-terminus from lumenal to cytoplasmic side. Post-translationally, N-glycosylated. In terms of processing, palmitoylated via thioester bonds.

Its subcellular location is the virion. The protein resides in the host cytoplasm. It localises to the host cell membrane. The protein localises to the host nucleus. It is found in the virion membrane. It catalyses the reaction Autocatalytic release of the core protein from the N-terminus of the togavirus structural polyprotein by hydrolysis of a -Trp-|-Ser- bond.. Functionally, forms an icosahedral capsid with a T=4 symmetry composed of 240 copies of the capsid protein surrounded by a lipid membrane through which penetrate 80 spikes composed of trimers of E1-E2 heterodimers. The capsid protein binds to the viral RNA genome at a site adjacent to a ribosome binding site for viral genome translation following genome release. Possesses a protease activity that results in its autocatalytic cleavage from the nascent structural protein. Following its self-cleavage, the capsid protein transiently associates with ribosomes, and within several minutes the protein binds to viral RNA and rapidly assembles into icosahedric core particles. The resulting nucleocapsid eventually associates with the cytoplasmic domain of the spike glycoprotein E2 at the cell membrane, leading to budding and formation of mature virions. In case of infection, new virions attach to target cells and after clathrin-mediated endocytosis their membrane fuses with the host endosomal membrane. This leads to the release of the nucleocapsid into the cytoplasm, followed by an uncoating event necessary for the genomic RNA to become accessible. The uncoating might be triggered by the interaction of capsid proteins with ribosomes. Binding of ribosomes would release the genomic RNA since the same region is genomic RNA-binding and ribosome-binding. Specifically inhibits interleukin-1 receptor-associated kinase 1/IRAK1-dependent signaling during viral entry, representing a means by which the alphaviruses may evade innate immune detection and activation prior to viral gene expression. Inhibits host transcription. Forms a tetrameric complex with XPO1/CRM1 and the nuclear import receptor importin. This complex blocks the central channel of host nuclear pores thereby inhibiting the receptor-mediated nuclear transport and thus the host mRNA and rRNA transcription. The inhibition of transcription is linked to a cytopathic effect on the host cell. Its function is as follows. Provides the signal sequence for the translocation of the precursor of protein E3/E2 to the host endoplasmic reticulum. Furin-cleaved E3 remains associated with spike glycoprotein E1 and mediates pH protection of the latter during the transport via the secretory pathway. After virion release from the host cell, the assembly protein E3 is gradually released in the extracellular space. In terms of biological role, plays a role in viral attachment to target host cell, by binding to the cell receptor. Synthesized as a p62 precursor which is processed by furin at the cell membrane just before virion budding, giving rise to E2-E1 heterodimer. The p62-E1 heterodimer is stable, whereas E2-E1 is unstable and dissociate at low pH. p62 is processed at the last step, presumably to avoid E1 fusion activation before its final export to cell surface. E2 C-terminus contains a transitory transmembrane that would be disrupted by palmitoylation, resulting in reorientation of the C-terminal tail from lumenal to cytoplasmic side. This step is critical since E2 C-terminus is involved in budding by interacting with capsid proteins. This release of E2 C-terminus in cytoplasm occurs lately in protein export, and precludes premature assembly of particles at the endoplasmic reticulum membrane. Constitutive membrane protein involved in virus glycoprotein processing, cell permeabilization, and the budding of viral particles. Disrupts the calcium homeostasis of the cell, probably at the endoplasmic reticulum level. This leads to cytoplasmic calcium elevation. Because of its lipophilic properties, the 6K protein is postulated to influence the selection of lipids that interact with the transmembrane domains of the glycoproteins, which, in turn, affects the deformability of the bilayer required for the extreme curvature that occurs as budding proceeds. Present in low amount in virions, about 3% compared to viral glycoproteins. Functionally, class II viral fusion protein. Fusion activity is inactive as long as E1 is bound to E2 in mature virion. After virus attachment to target cell and endocytosis, acidification of the endosome would induce dissociation of E1/E2 heterodimer and concomitant trimerization of the E1 subunits. This E1 trimer is fusion active, and promotes release of viral nucleocapsid in cytoplasm after endosome and viral membrane fusion. Efficient fusion requires the presence of cholesterol and sphingolipid in the target membrane. Fusion is optimal at levels of about 1 molecule of cholesterol per 2 molecules of phospholipids, and is specific for sterols containing a 3-beta-hydroxyl group. This Aedes (Human) protein is Structural polyprotein.